The following is a 264-amino-acid chain: Transcription factor bHLH52 (264 aa).

In terms of domain architecture, bHLH spans 134–183; the sequence is RELSAQSIAARKRRRRITEKTQELGKLIPGSQKHNTAEMFNAAAKYVKFL.

Homodimer. Expressed constitutively in roots, leaves, stems, and flowers.

The protein resides in the nucleus. This Arabidopsis thaliana (Mouse-ear cress) protein is Transcription factor bHLH52 (BHLH52).